The following is a 564-amino-acid chain: Solute carrier family 22 member 21 (564 aa).

The Cytoplasmic portion of the chain corresponds to M1–L20. A helical transmembrane segment spans residues I21–F41. Residues L42–A142 are Extracellular-facing. N-linked (GlcNAc...) asparagine glycans are attached at residues N57, N64, and N91. The chain crosses the membrane as a helical span at residues P143 to L163. At S164–I172 the chain is on the cytoplasmic side. A helical membrane pass occupies residues L173 to F193. Residues E194 to T197 lie on the Extracellular side of the membrane. The chain crosses the membrane as a helical span at residues L198–G218. Position 218 to 225 (G218 to S225) interacts with ATP. At T219–T232 the chain is on the cytoplasmic side. The chain crosses the membrane as a helical span at residues L233 to I253. At R254 to R257 the chain is on the extracellular side. A helical transmembrane segment spans residues R258–P278. The Cytoplasmic portion of the chain corresponds to E279–R344. A helical membrane pass occupies residues I345–S365. Over L366–Y376 the chain is Extracellular. A helical membrane pass occupies residues V377 to L397. Topologically, residues Q398–S409 are cytoplasmic. The chain crosses the membrane as a helical span at residues L410–L430. Residues S431–T433 lie on the Extracellular side of the membrane. A helical transmembrane segment spans residues L434 to A454. The Cytoplasmic segment spans residues E455–G465. Residues V466–L486 form a helical membrane-spanning segment. Residues G487–R491 are Extracellular-facing. Residues R492 to F512 form a helical membrane-spanning segment. The Cytoplasmic segment spans residues P513–F564. Positions K532–F564 are disordered.

It belongs to the major facilitator (TC 2.A.1) superfamily. Organic cation transporter (TC 2.A.1.19) family. In terms of tissue distribution, predominantly expressed in testis.

Its subcellular location is the peroxisome membrane. Functionally, sodium-ion independent, medium affinity carnitine transporter. Also transports organic cations such as tetraethylammonium (TEA) without the involvement of sodium. Relative uptake activity ratio of carnitine to TEA is 746. This Mus musculus (Mouse) protein is Solute carrier family 22 member 21 (Slc22a21).